The sequence spans 152 residues: Protein-export protein SecB (152 aa).

Belongs to the SecB family. As to quaternary structure, homotetramer, a dimer of dimers. One homotetramer interacts with 1 SecA dimer.

Its subcellular location is the cytoplasm. Functionally, one of the proteins required for the normal export of preproteins out of the cell cytoplasm. It is a molecular chaperone that binds to a subset of precursor proteins, maintaining them in a translocation-competent state. It also specifically binds to its receptor SecA. The polypeptide is Protein-export protein SecB (Rickettsia conorii (strain ATCC VR-613 / Malish 7)).